The chain runs to 216 residues: Ribosomal RNA small subunit methyltransferase G (216 aa).

S-adenosyl-L-methionine is bound by residues Gly75, Leu80, and Arg141.

Belongs to the methyltransferase superfamily. RNA methyltransferase RsmG family.

It localises to the cytoplasm. It catalyses the reaction guanosine(527) in 16S rRNA + S-adenosyl-L-methionine = N(7)-methylguanosine(527) in 16S rRNA + S-adenosyl-L-homocysteine. Its function is as follows. Specifically methylates the N7 position of guanine in position 527 of 16S rRNA. This is Ribosomal RNA small subunit methyltransferase G from Nitrosospira multiformis (strain ATCC 25196 / NCIMB 11849 / C 71).